Reading from the N-terminus, the 637-residue chain is Threonine--tRNA ligase (637 aa).

The 61-residue stretch at 1-61 (MIKISLKNGK…NKDCKVEILT (61 aa)) folds into the TGS domain. Residues 242 to 532 (DHRKLGKELD…LIEHYAGAFP (291 aa)) are catalytic. Positions 333, 384, and 509 each coordinate Zn(2+).

Belongs to the class-II aminoacyl-tRNA synthetase family. In terms of assembly, homodimer. It depends on Zn(2+) as a cofactor.

It is found in the cytoplasm. The catalysed reaction is tRNA(Thr) + L-threonine + ATP = L-threonyl-tRNA(Thr) + AMP + diphosphate + H(+). Its function is as follows. Catalyzes the attachment of threonine to tRNA(Thr) in a two-step reaction: L-threonine is first activated by ATP to form Thr-AMP and then transferred to the acceptor end of tRNA(Thr). Also edits incorrectly charged L-seryl-tRNA(Thr). This is Threonine--tRNA ligase from Clostridium kluyveri (strain NBRC 12016).